The primary structure comprises 465 residues: UDP-N-acetylmuramate--L-alanine ligase (465 aa).

ATP is bound at residue 112–118 (GTHGKTT).

The protein belongs to the MurCDEF family.

The protein resides in the cytoplasm. The enzyme catalyses UDP-N-acetyl-alpha-D-muramate + L-alanine + ATP = UDP-N-acetyl-alpha-D-muramoyl-L-alanine + ADP + phosphate + H(+). Its pathway is cell wall biogenesis; peptidoglycan biosynthesis. Its function is as follows. Cell wall formation. This Burkholderia mallei (strain NCTC 10247) protein is UDP-N-acetylmuramate--L-alanine ligase.